Consider the following 429-residue polypeptide: MATEQRPFHLVVFGASGFTGQFVTEEVAREQVDPERSSRLPWAVAGRSREKLQRVLEKAALKLGRPTLSSEVGIIICDIANPASLDEMAKQATVVPNCVGPYRFYGEPVIKACIENGASCIDISGEPQFLELMQLKYHEKAADKGVYIIGSSGFDSIPADLGVIYTRNKMNGTLTAVESFLTIHSGPEGLSIHDGTWKSAIYGFGDQSNLRKLRNASNLKPVPLVGPKLKRRWPISYCRELKGYSIPFMGSDVSVVRRTQRYLYENLEESPVQYAAYATVGGITSVIKLMFAGLFFLFFVRFGIGRQLLIKFPWFFSFGYFSKQGPTQKQIDAASFTLTFFGQGYSQGIGTDKNKPNIKICTQVKGPEAGYVATPIAMVQAAMTLLNDASHLPKAGGVFTPGAAFSKTKLIDRLNKHGIEFSVISSSEV.

Ala-2 is modified (N-acetylalanine). Ser-217 is modified (phosphoserine).

The protein belongs to the saccharopine dehydrogenase family.

This Pongo abelii (Sumatran orangutan) protein is Saccharopine dehydrogenase-like oxidoreductase (SCCPDH).